The following is a 270-amino-acid chain: uncharacterized protein (270 aa).

The protein resides in the cytoplasm. This is an uncharacterized protein from Schizosaccharomyces pombe (strain 972 / ATCC 24843) (Fission yeast).